A 614-amino-acid chain; its full sequence is Acid phosphatase (614 aa).

The first 22 residues, 1–22, serve as a signal peptide directing secretion; sequence MKGTAASALLVALSATAAQARP. The Fibronectin type-III domain maps to 80-176; the sequence is IPKGMHIHYQ…EVLSFKTSRP (97 aa). Residues N110, N161, N242, N295, N333, N340, N352, N408, N429, N512, N523, N559, and N578 are each glycosylated (N-linked (GlcNAc...) asparagine). Residues 606–614 constitute a propeptide that is removed on maturation; that stretch reads VAGGKKLHS.

Monomer. The cofactor is Cu cation. In terms of processing, glycosylated; probably with N-linked high-mannose oligosaccharides.

The protein resides in the secreted. It catalyses the reaction a phosphate monoester + H2O = an alcohol + phosphate. Its activity is regulated as follows. Competitively inhibited by phosphomycin and inorganic orthophosphate. The protein is Acid phosphatase (aphA) of Aspergillus ficuum.